The chain runs to 77 residues: Large ribosomal subunit protein eL14 (77 aa).

Belongs to the eukaryotic ribosomal protein eL14 family.

The chain is Large ribosomal subunit protein eL14 from Methanococcus maripaludis (strain C6 / ATCC BAA-1332).